A 337-amino-acid polypeptide reads, in one-letter code: Pyridoxal 5'-phosphate synthase subunit PdxS (337 aa).

D63 serves as a coordination point for D-ribose 5-phosphate. K120 acts as the Schiff-base intermediate with D-ribose 5-phosphate in catalysis. G192 serves as a coordination point for D-ribose 5-phosphate. K204 is a binding site for D-glyceraldehyde 3-phosphate. D-ribose 5-phosphate is bound by residues G253 and 274–275; that span reads GS.

The protein belongs to the PdxS/SNZ family. In terms of assembly, in the presence of PdxT, forms a dodecamer of heterodimers.

It carries out the reaction aldehydo-D-ribose 5-phosphate + D-glyceraldehyde 3-phosphate + L-glutamine = pyridoxal 5'-phosphate + L-glutamate + phosphate + 3 H2O + H(+). It functions in the pathway cofactor biosynthesis; pyridoxal 5'-phosphate biosynthesis. Its function is as follows. Catalyzes the formation of pyridoxal 5'-phosphate from ribose 5-phosphate (RBP), glyceraldehyde 3-phosphate (G3P) and ammonia. The ammonia is provided by the PdxT subunit. Can also use ribulose 5-phosphate and dihydroxyacetone phosphate as substrates, resulting from enzyme-catalyzed isomerization of RBP and G3P, respectively. The polypeptide is Pyridoxal 5'-phosphate synthase subunit PdxS (Aeropyrum pernix (strain ATCC 700893 / DSM 11879 / JCM 9820 / NBRC 100138 / K1)).